We begin with the raw amino-acid sequence, 711 residues long: Polyribonucleotide nucleotidyltransferase (711 aa).

Mg(2+) is bound by residues D486 and D492. In terms of domain architecture, KH spans 553–612 (PRIHTIKINPDKIKDVIGKGGSVIRALTEETGTTIEIEDDGTVKIAATDGEKAKHAIRRI). One can recognise an S1 motif domain in the interval 622–690 (GRVYTGKVTR…RQGRIRLSIK (69 aa)). Positions 689–711 (IKEATEQSQPAAAPEAPAAEQGE) are disordered. Positions 694–711 (EQSQPAAAPEAPAAEQGE) are enriched in low complexity.

The protein belongs to the polyribonucleotide nucleotidyltransferase family. In terms of assembly, component of the RNA degradosome, which is a multiprotein complex involved in RNA processing and mRNA degradation. Mg(2+) serves as cofactor.

The protein resides in the cytoplasm. It carries out the reaction RNA(n+1) + phosphate = RNA(n) + a ribonucleoside 5'-diphosphate. Involved in mRNA degradation. Catalyzes the phosphorolysis of single-stranded polyribonucleotides processively in the 3'- to 5'-direction. The protein is Polyribonucleotide nucleotidyltransferase of Escherichia coli (strain SE11).